The primary structure comprises 1045 residues: Endoglucanase B (1045 aa).

The signal sequence occupies residues 1–33 (MLRQVPRTLVAGGSALAVAVGVLVAPLATGAAA). The tract at residues 34-492 (APTYNYAEAL…LASFPTPEQP (459 aa)) is catalytic. Catalysis depends on Asp-91, which acts as the Nucleophile. Active-site residues include His-410, Asp-449, and Glu-458. The region spanning 493 to 642 (DGDQLFVEAM…STLVWGKEPT (150 aa)) is the CBM3 domain. 4 linker ('hinge') (Pro-Thr box) regions span residues 644–650 (TTTDTTP), 734–748 (AAVT…ETEP), 831–846 (APVT…DTVA), and 931–944 (SPVT…TSTP). 3 Fibronectin type-III domains span residues 653 to 743 (TPGT…TDTT), 751 to 840 (TPGT…TAAP), and 849 to 940 (VPGT…TLPV). One can recognise a CBM2 domain in the interval 939-1045 (PVTSTPSCTV…SFTVNGEVCG (107 aa)). A disulfide bridge connects residues Cys-946 and Cys-1044.

It belongs to the glycosyl hydrolase 9 (cellulase E) family.

It catalyses the reaction Endohydrolysis of (1-&gt;4)-beta-D-glucosidic linkages in cellulose, lichenin and cereal beta-D-glucans.. Functionally, the biological conversion of cellulose to glucose generally requires three types of hydrolytic enzymes: (1) Endoglucanases which cut internal beta-1,4-glucosidic bonds; (2) Exocellobiohydrolases that cut the disaccharide cellobiose from the non-reducing end of the cellulose polymer chain; (3) Beta-1,4-glucosidases which hydrolyze the cellobiose and other short cello-oligosaccharides to glucose. This Cellulomonas fimi protein is Endoglucanase B (cenB).